The sequence spans 368 residues: Probable staphylococcal-like nuclease CAN2 (368 aa).

The N-myristoyl glycine moiety is linked to residue Gly2. The S-palmitoyl cysteine moiety is linked to residue Cys7. The tract at residues 16–56 (DHYPYYKPTSRPHYQPPHYHGQPAAPPAPLQQQHLGPHGVT) is disordered. The span at 27 to 38 (PHYQPPHYHGQP) shows a compositional bias: low complexity. The TNase-like domain maps to 168–344 (NTLPVYDKCI…RAANRGLWAS (177 aa)). Residue Asp181 coordinates Ca(2+). Arg251 is an active-site residue. Asp256 provides a ligand contact to Ca(2+). Catalysis depends on residues Glu259 and Arg293.

This sequence belongs to the thermonuclease family. It depends on Ca(2+) as a cofactor.

Its subcellular location is the cell membrane. Its function is as follows. Enzyme that catalyzes the hydrolysis of both DNA and RNA at the 5' position of the phosphodiester bond. The sequence is that of Probable staphylococcal-like nuclease CAN2 from Oryza sativa subsp. japonica (Rice).